The primary structure comprises 257 residues: Hydroxyacylglutathione hydrolase (257 aa).

The Zn(2+) site is built by histidine 54, histidine 56, aspartate 58, histidine 59, histidine 110, aspartate 131, and histidine 169.

It belongs to the metallo-beta-lactamase superfamily. Glyoxalase II family. As to quaternary structure, monomer. Requires Zn(2+) as cofactor.

It carries out the reaction an S-(2-hydroxyacyl)glutathione + H2O = a 2-hydroxy carboxylate + glutathione + H(+). It participates in secondary metabolite metabolism; methylglyoxal degradation; (R)-lactate from methylglyoxal: step 2/2. Its function is as follows. Thiolesterase that catalyzes the hydrolysis of S-D-lactoyl-glutathione to form glutathione and D-lactic acid. In Hahella chejuensis (strain KCTC 2396), this protein is Hydroxyacylglutathione hydrolase.